We begin with the raw amino-acid sequence, 411 residues long: Lissencephaly-1 homolog (411 aa).

The region spanning 9–41 (QREELNQAIADYLGSNGYGDSLETFRKEADVST) is the LisH domain. Residues 56–83 (TSVIRLQKKVMELEAKLTEAEKEVIEGA) are a coiled coil. 7 WD repeats span residues 106 to 147 (GHRA…RSLK), 148 to 187 (GHTDSVQDVAFDSQGKLLASCSADLSIKLWDFQQSYECVK), 191 to 230 (GHDHNVSSVAFVPAGDYVLSASRDRTIKMWEVATGYCVKT), 233 to 272 (GHREWVRMVRVHIEGSIFATCSNDHTIRVWLMNSKDCKVE), 275 to 334 (DHEH…CLLT), 337 to 376 (GHDNWVRGLAFHPGGKYLVSASDDKTIRVWDLRNKRCMKT), and 379 to 411 (AHQHFCTSIDFHKAHPYVISGSVDQTVKVWECR).

It belongs to the WD repeat LIS1/nudF family.

Its subcellular location is the cytoplasm. It localises to the cytoskeleton. It is found in the microtubule organizing center. The protein resides in the centrosome. Its function is as follows. Positively regulates the activity of the minus-end directed microtubule motor protein dynein. May enhance dynein-mediated microtubule sliding by targeting dynein to the microtubule plus end. Required for several dynein- and microtubule-dependent processes. The sequence is that of Lissencephaly-1 homolog from Drosophila persimilis (Fruit fly).